The chain runs to 218 residues: Peptide methionine sulfoxide reductase MsrA (218 aa).

Cys-57 is a catalytic residue.

The protein belongs to the MsrA Met sulfoxide reductase family.

It catalyses the reaction L-methionyl-[protein] + [thioredoxin]-disulfide + H2O = L-methionyl-(S)-S-oxide-[protein] + [thioredoxin]-dithiol. The enzyme catalyses [thioredoxin]-disulfide + L-methionine + H2O = L-methionine (S)-S-oxide + [thioredoxin]-dithiol. Functionally, has an important function as a repair enzyme for proteins that have been inactivated by oxidation. Catalyzes the reversible oxidation-reduction of methionine sulfoxide in proteins to methionine. The sequence is that of Peptide methionine sulfoxide reductase MsrA from Brucella melitensis biotype 1 (strain ATCC 23456 / CCUG 17765 / NCTC 10094 / 16M).